A 348-amino-acid polypeptide reads, in one-letter code: GMP reductase (348 aa).

108-131 (ADFQKTKDVMALSDELIFICIDIA) is a binding site for NADP(+). The K(+) site is built by glycine 181 and glycine 183. Cysteine 186 (thioimidate intermediate) is an active-site residue. Residue 216-239 (IIGDGGCACAGDVAKAFGGGADFV) participates in NADP(+) binding.

It belongs to the IMPDH/GMPR family. GuaC type 1 subfamily. In terms of assembly, homotetramer.

The enzyme catalyses IMP + NH4(+) + NADP(+) = GMP + NADPH + 2 H(+). Catalyzes the irreversible NADPH-dependent deamination of GMP to IMP. It functions in the conversion of nucleobase, nucleoside and nucleotide derivatives of G to A nucleotides, and in maintaining the intracellular balance of A and G nucleotides. In Vibrio vulnificus (strain CMCP6), this protein is GMP reductase.